The primary structure comprises 376 residues: Arf-GAP with dual PH domain-containing protein 2 (376 aa).

Residues 9–130 (KRLLELLQAA…EFMAEKAVSP (122 aa)) enclose the Arf-GAP domain. The C4-type zinc finger occupies 25–48 (CADCGAADPDWASYKLGVFICLHC). 2 PH domains span residues 131-232 (PGDR…AARL) and 254-360 (NYLK…GVLS).

As to expression, expressed in many tissues, with highest levels in fat, heart and skeletal muscle. Also detected in kidney, liver and lung.

It is found in the cytoplasm. The protein resides in the cell membrane. In terms of biological role, GTPase-activating protein for the ADP ribosylation factor family (Potential). Binds phosphatidylinositol 4,5-bisphosphate, phosphatidylinositol 3,4,5-trisphosphate (PtdInsP3) and inositol 1,3,4,5-tetrakisphosphate (InsP4). Binding of phosphatidylinositol 3,5-bisphosphate and phosphatidylinositol 3,4-bisphosphate occurs at a much lower affinity. Possesses a stoichiometry of two binding sites for InsP4 with identical affinity. The chain is Arf-GAP with dual PH domain-containing protein 2 (Adap2) from Rattus norvegicus (Rat).